A 269-amino-acid polypeptide reads, in one-letter code: Formamidopyrimidine-DNA glycosylase (269 aa).

Catalysis depends on proline 2, which acts as the Schiff-base intermediate with DNA. Glutamate 3 (proton donor) is an active-site residue. Lysine 57 acts as the Proton donor; for beta-elimination activity in catalysis. Residues histidine 90, arginine 109, and lysine 150 each contribute to the DNA site. An FPG-type zinc finger spans residues glutamine 235–cysteine 269. The active-site Proton donor; for delta-elimination activity is the arginine 259.

Belongs to the FPG family. Monomer. Zn(2+) is required as a cofactor.

The enzyme catalyses Hydrolysis of DNA containing ring-opened 7-methylguanine residues, releasing 2,6-diamino-4-hydroxy-5-(N-methyl)formamidopyrimidine.. It catalyses the reaction 2'-deoxyribonucleotide-(2'-deoxyribose 5'-phosphate)-2'-deoxyribonucleotide-DNA = a 3'-end 2'-deoxyribonucleotide-(2,3-dehydro-2,3-deoxyribose 5'-phosphate)-DNA + a 5'-end 5'-phospho-2'-deoxyribonucleoside-DNA + H(+). Functionally, involved in base excision repair of DNA damaged by oxidation or by mutagenic agents. Acts as a DNA glycosylase that recognizes and removes damaged bases. Has a preference for oxidized purines, such as 7,8-dihydro-8-oxoguanine (8-oxoG). Has AP (apurinic/apyrimidinic) lyase activity and introduces nicks in the DNA strand. Cleaves the DNA backbone by beta-delta elimination to generate a single-strand break at the site of the removed base with both 3'- and 5'-phosphates. The sequence is that of Formamidopyrimidine-DNA glycosylase from Vibrio vulnificus (strain YJ016).